The primary structure comprises 255 residues: Ribonuclease PH (255 aa).

Residues Arg86 and 124–126 (GTR) each bind phosphate.

Belongs to the RNase PH family. Homohexameric ring arranged as a trimer of dimers.

It catalyses the reaction tRNA(n+1) + phosphate = tRNA(n) + a ribonucleoside 5'-diphosphate. In terms of biological role, phosphorolytic 3'-5' exoribonuclease that plays an important role in tRNA 3'-end maturation. Removes nucleotide residues following the 3'-CCA terminus of tRNAs; can also add nucleotides to the ends of RNA molecules by using nucleoside diphosphates as substrates, but this may not be physiologically important. Probably plays a role in initiation of 16S rRNA degradation (leading to ribosome degradation) during starvation. This chain is Ribonuclease PH, found in Hydrogenobaculum sp. (strain Y04AAS1).